We begin with the raw amino-acid sequence, 124 residues long: Urease subunit beta (124 aa).

It belongs to the urease beta subunit family. In terms of assembly, heterotrimer of UreA (gamma), UreB (beta) and UreC (alpha) subunits. Three heterotrimers associate to form the active enzyme.

Its subcellular location is the cytoplasm. It catalyses the reaction urea + 2 H2O + H(+) = hydrogencarbonate + 2 NH4(+). It participates in nitrogen metabolism; urea degradation; CO(2) and NH(3) from urea (urease route): step 1/1. The polypeptide is Urease subunit beta (Halalkalibacterium halodurans (strain ATCC BAA-125 / DSM 18197 / FERM 7344 / JCM 9153 / C-125) (Bacillus halodurans)).